A 379-amino-acid chain; its full sequence is Cell division protein FtsZ (379 aa).

GTP-binding positions include 18–22 (GGGVN), 105–107 (GTG), E136, R140, and D184.

Belongs to the FtsZ family. As to quaternary structure, homodimer. Polymerizes to form a dynamic ring structure in a strictly GTP-dependent manner. Interacts directly with several other division proteins.

Its subcellular location is the cytoplasm. In terms of biological role, essential cell division protein that forms a contractile ring structure (Z ring) at the future cell division site. The regulation of the ring assembly controls the timing and the location of cell division. One of the functions of the FtsZ ring is to recruit other cell division proteins to the septum to produce a new cell wall between the dividing cells. Binds GTP and shows GTPase activity. This is Cell division protein FtsZ from Mycobacterium bovis (strain ATCC BAA-935 / AF2122/97).